Consider the following 348-residue polypeptide: Elongation factor Ts (348 aa).

An involved in Mg(2+) ion dislocation from EF-Tu region spans residues 80-83; it reads TDFV.

It belongs to the EF-Ts family.

It is found in the cytoplasm. Functionally, associates with the EF-Tu.GDP complex and induces the exchange of GDP to GTP. It remains bound to the aminoacyl-tRNA.EF-Tu.GTP complex up to the GTP hydrolysis stage on the ribosome. In Streptococcus mutans serotype c (strain ATCC 700610 / UA159), this protein is Elongation factor Ts.